The following is a 474-amino-acid chain: Glycogen synthase (474 aa).

K15 lines the ADP-alpha-D-glucose pocket.

The protein belongs to the glycosyltransferase 1 family. Bacterial/plant glycogen synthase subfamily.

The enzyme catalyses [(1-&gt;4)-alpha-D-glucosyl](n) + ADP-alpha-D-glucose = [(1-&gt;4)-alpha-D-glucosyl](n+1) + ADP + H(+). Its pathway is glycan biosynthesis; glycogen biosynthesis. Synthesizes alpha-1,4-glucan chains using ADP-glucose. The chain is Glycogen synthase from Chlamydia trachomatis serovar L2b (strain UCH-1/proctitis).